The following is a 294-amino-acid chain: 1D-myo-inositol 2-acetamido-2-deoxy-alpha-D-glucopyranoside deacetylase (294 aa).

Residues His13, Asp16, and His148 each contribute to the Zn(2+) site.

This sequence belongs to the MshB deacetylase family. It depends on Zn(2+) as a cofactor.

The enzyme catalyses 1D-myo-inositol 2-acetamido-2-deoxy-alpha-D-glucopyranoside + H2O = 1D-myo-inositol 2-amino-2-deoxy-alpha-D-glucopyranoside + acetate. Catalyzes the deacetylation of 1D-myo-inositol 2-acetamido-2-deoxy-alpha-D-glucopyranoside (GlcNAc-Ins) in the mycothiol biosynthesis pathway. In Geodermatophilus obscurus (strain ATCC 25078 / DSM 43160 / JCM 3152 / CCUG 61914 / KCC A-0152 / KCTC 9177 / NBRC 13315 / NRRL B-3577 / G-20), this protein is 1D-myo-inositol 2-acetamido-2-deoxy-alpha-D-glucopyranoside deacetylase.